A 354-amino-acid polypeptide reads, in one-letter code: Guanine nucleotide-binding protein G(o) subunit alpha (354 aa).

Gly-2 carries the N-myristoyl glycine lipid modification. Cys-3 carries the S-palmitoyl cysteine lipid modification. In terms of domain architecture, G-alpha spans 32–354; it reads KDIKLLLLGA…ANNLRGCGLY (323 aa). A G1 motif region spans residues 35–48; it reads KLLLLGAGESGKST. GTP-binding positions include 40–47, 176–182, 201–205, 270–273, and Ala-326; these read GAGESGKS, LRTRVKT, DVGGQ, and NKKD. Residues Ser-47 and Thr-182 each contribute to the Mg(2+) site. The segment at 174 to 182 is G2 motif; sequence DILRTRVKT. The interval 197–206 is G3 motif; the sequence is FKLFDVGGQR. The segment at 266–273 is G4 motif; sequence ILFLNKKD. Residues 324-329 are G5 motif; it reads TCATDT.

It belongs to the G-alpha family. G(i/o/t/z) subfamily. G proteins are composed of 3 units; alpha, beta and gamma. The alpha chain contains the guanine nucleotide binding site. Interacts (in GDP-bound form) with gpr-1; gpr-1 forms a complex with gpr-2 and lin-5. Interacts (in GDP-bound form) with gpb-1. Interacts (in GDP-bound form) with gbas-1 (via GBA motif); the interaction leads to activation of goa-1. As to expression, expressed in the ASER neuron and the intestine.

In terms of biological role, guanine nucleotide-binding proteins (G proteins) are involved as modulators or transducers in various transmembrane signaling systems. In the 1-cell embryo, probably together with gpa-16, controls nuclear rotation and spindle elongation during mitosis. During the first embryonic cell divisions, plays a role in gpr-1/2 cortical localization and in the proper orientation of EMS blastomere mitotic spindle. Polarity determinants (par genes) may regulate lin-5/gpr-1/gpr-2/goa-1 locally to create the asymmetric forces that drive spindle movement. Involved in chemosensory responses to attractive and repellent odors detected by AWC and AWB sensory neurons, respectively. In ASER neurons, acts downstream of glr-3 to regulate cold avoidance behavior via calcium signaling, and it may also play a role in sensing cold in the intestine. Negatively regulates axon regeneration after injury downstream of the inhibitory compound arachidonoyl ethanolamide (AEA) by antagonizing the activation of the JNK pathway (mlk-1/mek-1/kgb-1). In neurons, may negatively regulate diacylglycerol (DAG) production mediated by egl-30 signaling cascade and thereby negatively regulates acetylcholine release. Couples to the muscarinic acetylcholine receptor gar-2 to negatively regulate cholinergic receptor activity in the presence of high levels of acetylcholine in ventral cord motor neurons. Plays a role in the navigational capacity of sperm and the targeting of sperm derived from males to the fertilization site in the uterus of hermaphrodites. Involved in egg-laying and in regulating dopamine-mediated locomotion. Most likely couples to the dopamine receptors dop-2 and dop-3 to positively regulate the dopamine-mediated suppression of crh-1/CREB1 transcription factor activation in cholinergic SIA neurons in the presence of food. In Caenorhabditis elegans, this protein is Guanine nucleotide-binding protein G(o) subunit alpha.